A 249-amino-acid chain; its full sequence is Enolase-phosphatase E1 (249 aa).

The protein belongs to the HAD-like hydrolase superfamily. MasA/MtnC family. Monomer. Mg(2+) serves as cofactor.

The catalysed reaction is 5-methylsulfanyl-2,3-dioxopentyl phosphate + H2O = 1,2-dihydroxy-5-(methylsulfanyl)pent-1-en-3-one + phosphate. It participates in amino-acid biosynthesis; L-methionine biosynthesis via salvage pathway; L-methionine from S-methyl-5-thio-alpha-D-ribose 1-phosphate: step 3/6. The protein operates within amino-acid biosynthesis; L-methionine biosynthesis via salvage pathway; L-methionine from S-methyl-5-thio-alpha-D-ribose 1-phosphate: step 4/6. In terms of biological role, bifunctional enzyme that catalyzes the enolization of 2,3-diketo-5-methylthiopentyl-1-phosphate (DK-MTP-1-P) into the intermediate 2-hydroxy-3-keto-5-methylthiopentenyl-1-phosphate (HK-MTPenyl-1-P), which is then dephosphorylated to form the acireductone 1,2-dihydroxy-3-keto-5-methylthiopentene (DHK-MTPene). This chain is Enolase-phosphatase E1, found in Synechococcus sp. (strain RCC307).